The following is a 740-amino-acid chain: NAD(P)H-quinone oxidoreductase subunit 5, chloroplastic (740 aa).

The next 16 membrane-spanning stretches (helical) occupy residues 9-29, 40-60, 89-109, 125-145, 147-167, 185-205, 219-239, 258-278, 286-306, 327-347, 354-374, 396-416, 425-445, 543-563, 602-622, and 717-737; these read WIIPFIPLPVPMLIGAGLFLF, WAFQSVLLLSIVMVFSIYLSI, IDPLTSIMSILITTVGIMVLI, FAYMSFFSTSMLGLVTSSNLI, IYIFWELVGLCSYLLIGFWFT, GDFGLLLGILGFYWITGSFEF, NEVDFLFVTLCAVLLFAGAVA, TPISALIHAATMVAAGIFLVA, VIPYIMYLISVIGIITVLLGA, LGYMMLALGMGSYRSALFHLI, ALLFLGSGSIIHSMETIVGYS, ITFLLGTLSLCGIPPLACFWS, WLYSPIFAIIAWATAGLTAFY, LFPIFVLGLFTLFVGSIGIPF, VLSVSIAYFGIFIASFLYKPI, and SYLFLYLAYVSIFLLVYYLLF.

This sequence belongs to the complex I subunit 5 family. NDH is composed of at least 16 different subunits, 5 of which are encoded in the nucleus.

It localises to the plastid. It is found in the chloroplast thylakoid membrane. The enzyme catalyses a plastoquinone + NADH + (n+1) H(+)(in) = a plastoquinol + NAD(+) + n H(+)(out). The catalysed reaction is a plastoquinone + NADPH + (n+1) H(+)(in) = a plastoquinol + NADP(+) + n H(+)(out). In terms of biological role, NDH shuttles electrons from NAD(P)H:plastoquinone, via FMN and iron-sulfur (Fe-S) centers, to quinones in the photosynthetic chain and possibly in a chloroplast respiratory chain. The immediate electron acceptor for the enzyme in this species is believed to be plastoquinone. Couples the redox reaction to proton translocation, and thus conserves the redox energy in a proton gradient. The polypeptide is NAD(P)H-quinone oxidoreductase subunit 5, chloroplastic (ndhF) (Nicotiana tabacum (Common tobacco)).